Here is a 131-residue protein sequence, read N- to C-terminus: MYQRDGNHTMITIKFDEKGLVPVIAQDKTTKDVLMLAYANKEAVDLTRSTGYAHYYSRSRNKLWKKGEESGHLQKVHEILVDCDEDAVIYLVDQLTAACHTGYRSCFYRRLDGTVSGERMFDPDEVYKKSE.

Aspartate 82 is a binding site for Mg(2+). Cysteine 83 contacts Zn(2+). Mg(2+) is bound by residues aspartate 84 and aspartate 86. Positions 99 and 106 each coordinate Zn(2+).

It belongs to the PRA-CH family. Homodimer. Mg(2+) serves as cofactor. Zn(2+) is required as a cofactor.

It is found in the cytoplasm. It carries out the reaction 1-(5-phospho-beta-D-ribosyl)-5'-AMP + H2O = 1-(5-phospho-beta-D-ribosyl)-5-[(5-phospho-beta-D-ribosylamino)methylideneamino]imidazole-4-carboxamide. Its pathway is amino-acid biosynthesis; L-histidine biosynthesis; L-histidine from 5-phospho-alpha-D-ribose 1-diphosphate: step 3/9. Catalyzes the hydrolysis of the adenine ring of phosphoribosyl-AMP. In Methanospirillum hungatei JF-1 (strain ATCC 27890 / DSM 864 / NBRC 100397 / JF-1), this protein is Phosphoribosyl-AMP cyclohydrolase.